We begin with the raw amino-acid sequence, 448 residues long: Senescence/dehydration-associated protein At4g35985, chloroplastic (448 aa).

The segment at 1 to 36 (MECSATPPKLYPTVDTSTTVAPLPKSSSSSSSTNNN) is disordered. The transit peptide at 1-56 (MECSATPPKLYPTVDTSTTVAPLPKSSSSSSSTNNNNLYPSINVNDLVNNIFPDPT) directs the protein to the chloroplast. Residues 26–36 (SSSSSSSTNNN) show a composition bias toward low complexity. The Senescence domain occupies 248 to 416 (IAAGSGQLIK…AWTVFKIRQA (169 aa)). A disordered region spans residues 422–448 (AMKPSSLAKTVVKTAAKERKKGKKSSK). A compositionally biased stretch (basic residues) spans 439-448 (ERKKGKKSSK).

In terms of tissue distribution, expressed in leaves (especially in midribs and trichomes), apical meristemic regions, stems, roots and flowers.

The protein resides in the plastid. It is found in the chloroplast. The protein is Senescence/dehydration-associated protein At4g35985, chloroplastic of Arabidopsis thaliana (Mouse-ear cress).